Consider the following 179-residue polypeptide: Phospholipase A2 (179 aa).

A signal peptide spans 1-21 (MHALRSSVLALWLCLHVSVRA). A propeptide spanning residues 22–39 (WMTYRSANGLDEYEPEDR) is cleaved from the precursor. Residues Trp47, Gly49, and Gly51 each coordinate Ca(2+). 5 disulfides stabilise this stretch: Cys48-Cys70, Cys69-Cys109, Cys76-Cys102, Cys100-Cys133, and Cys142-Cys150. The active site involves His73. Asp74 is a Ca(2+) binding site. Asp103 is an active-site residue.

Belongs to the phospholipase A2 family. Group III subfamily. The cofactor is Ca(2+). As to expression, expressed by the venom gland.

It localises to the secreted. It carries out the reaction a 1,2-diacyl-sn-glycero-3-phosphocholine + H2O = a 1-acyl-sn-glycero-3-phosphocholine + a fatty acid + H(+). Its function is as follows. May potentiate Xylotoxin(1)-Xa1a DRG activation and cell lysis, since the orthologous A.mellifera PA2 potentiates Xylotoxin(1)-Xa1a DRG activation and cell lysis. In vivo, intraplantar injection in mice may potentiate spontaneous pain behaviors and paw swelling caused by Xylotoxin(1)-Xa1a, since the orthologous A.mellifera PA2 shows this effect. PLA2 catalyzes the calcium-dependent hydrolysis of the 2-acyl groups in 3-sn-phosphoglycerides. The chain is Phospholipase A2 from Xylocopa aruana (Great carpenter bee).